Consider the following 481-residue polypeptide: MQWETVIGLEVHVQLATKTKIFSGASTAFGAEPNTQACAIDLALPGTLPTPNAEAFRFATMFGLAVNAEIGKRSVFERKNYFYPDLPKGYQTTQLAEPIVGAGYVDLELEGGRTKRVRIHHAHLEEDAGKSLHEDFAGMSGIDLNRAGTPLIEVVTEPDMRSAEEAVAFAKKLHSIVTSLEICDGDMSQGSMRFDVNISVRPKGQEKFGTRTETKNLNSFKFMEEAIALEVERQIDVLEDGGKIIQETRLYNGDTKKARSMRSKEDSNDYRYFPCPDLLPVILDDDYIDAVRQQMPELPDARQARFIGQYALSSYDAGQLSADKLVAAFFEQTAQLSQDAKLSANWVLGELAAHLNKTEQRISNSTVTPELLAGLIARIKDGTLSSKIAKLVFEAICNGEGDADSIIDTRGLKQVSDTGALEKMIDEVIAKNPQQVDNYRNADDSKRPKMLGFFVGQVMKASQGQANPQALNELLLKKLNT.

The protein belongs to the GatB/GatE family. GatB subfamily. Heterotrimer of A, B and C subunits.

It carries out the reaction L-glutamyl-tRNA(Gln) + L-glutamine + ATP + H2O = L-glutaminyl-tRNA(Gln) + L-glutamate + ADP + phosphate + H(+). The catalysed reaction is L-aspartyl-tRNA(Asn) + L-glutamine + ATP + H2O = L-asparaginyl-tRNA(Asn) + L-glutamate + ADP + phosphate + 2 H(+). Allows the formation of correctly charged Asn-tRNA(Asn) or Gln-tRNA(Gln) through the transamidation of misacylated Asp-tRNA(Asn) or Glu-tRNA(Gln) in organisms which lack either or both of asparaginyl-tRNA or glutaminyl-tRNA synthetases. The reaction takes place in the presence of glutamine and ATP through an activated phospho-Asp-tRNA(Asn) or phospho-Glu-tRNA(Gln). In Cellvibrio japonicus (strain Ueda107) (Pseudomonas fluorescens subsp. cellulosa), this protein is Aspartyl/glutamyl-tRNA(Asn/Gln) amidotransferase subunit B.